The sequence spans 487 residues: Vacuolar protein sorting-associated protein 30 (487 aa).

Residues 33 to 129 (PQTLKKSSVP…DNPDAPMGSE (97 aa)) are disordered. The span at 52–62 (QSRKSIYDRVS) shows a compositional bias: basic and acidic residues. The span at 81 to 94 (SSMSFVLLSESQMA) shows a compositional bias: polar residues. A coiled-coil region spans residues 152–282 (VECTEMLVEG…DSQLLEKLQR (131 aa)). Positions 283–480 (SNVYNDTFCI…LAHASNVTSN (198 aa)) are BARA. The interval 456–481 (WTKACKLTLTCCKFLLAHASNVTSNA) is required for membrane-association, autophagic function during starvation and normal autophagosome morphology.

This sequence belongs to the beclin family. Component of the autophagy-specific VPS34 PI3-kinase complex I; and of the VPS34 PI3-kinase complex II.

It localises to the endosome membrane. The protein resides in the vacuole membrane. The protein localises to the preautophagosomal structure membrane. Its function is as follows. Required for cytoplasm to vacuole transport (Cvt), autophagy, nucleophagy, and mitophagy, as a part of the autophagy-specific VPS34 PI3-kinase complex I. This complex is essential to recruit the ATG8-phosphatidylinositol conjugate and the ATG12-ATG5 conjugate to the pre-autophagosomal structure. Also involved in endosome-to-Golgi retrograde transport as part of the VPS34 PI3-kinase complex II. Autophagy is required for proper vegetative growth, asexual/sexual reproduction, and full virulence. Autophagy is particularly involved in the biosynthesis of deoxynivalenol (DON), an important virulence determinant. This is Vacuolar protein sorting-associated protein 30 from Gibberella zeae (strain ATCC MYA-4620 / CBS 123657 / FGSC 9075 / NRRL 31084 / PH-1) (Wheat head blight fungus).